The sequence spans 783 residues: MAQAGFILTRHWRDTPQGTEVSFWLATDNGPLQVTLAPQESVAFIPADQVPRAQHILQGEQGFRLTPLALKDFHRQPVYGLYCRAHRQLMNYEKRLREGGVTVYEADVRPPERYLMERFITSPVWVEGDMHNGTIVNARLKPHPDYRPPLKWVSIDIETTRHGELYCIGLEGCGQRIVYMLGPENGDASSLDFELEYVASRPQLLEKLNAWFANYDPDVIIGWNVVQFDLRMLQKHAERYRLPLRLGRDNSELEWREHGFKNGVFFAQAKGRLIIDGIEALKSAFWNFSSFSLETVAQELLGEGKSIDNPWDRMDEIDRRFAEDKPALATYNLKDCELVTQIFHKTEIMPFLLERATVNGLPVDRHGGSVAAFGHLYFPRMHRAGYVAPNLGEVPPHASPGGYVMDSRPGLYDSVLVLDYKSLYPSIIRTFLIDPVGLVEGMAQPDPEHSTEGFLDAWFSREKHCLPEIVTNIWHGRDEAKRQGNKPLSQALKIIMNAFYGVLGTTACRFFDPRLASSITMRGHQIMRQTKALIEAQGYDVIYGDTDSTFVWLKGAHSEEEAAKIGRALVQHVNAWWAETLQKQRLTSALELEYETHFCRFLMPTIRGADTGSKKRYAGLIQEGDKQRMVFKGLETVRTDWTPLAQQFQQELYLRIFRNEPYQEYVRETIDKLMAGELDARLVYRKRLRRPLSEYQRNVPPHVRAARLADEENQKRGRPLQYQNRGTIKYVWTTNGPEPLDYQRSPLDYEHYLTRQLQPVAEGILPFIEDNFATLMTGQLGLF.

This sequence belongs to the DNA polymerase type-B family.

It catalyses the reaction DNA(n) + a 2'-deoxyribonucleoside 5'-triphosphate = DNA(n+1) + diphosphate. Its activity is regulated as follows. DNA polymerase II activity is regulated by the lexA gene during the SOS response. Functionally, thought to be involved in DNA repair and/or mutagenesis. Its processivity is enhanced by the beta sliding clamp (dnaN) and clamp loader. The protein is DNA polymerase II (polB) of Escherichia coli (strain K12).